The chain runs to 140 residues: Holo-[acyl-carrier-protein] synthase (140 aa).

Positions 8 and 62 each coordinate Mg(2+).

Belongs to the P-Pant transferase superfamily. AcpS family. Mg(2+) serves as cofactor.

The protein resides in the cytoplasm. It carries out the reaction apo-[ACP] + CoA = holo-[ACP] + adenosine 3',5'-bisphosphate + H(+). Functionally, transfers the 4'-phosphopantetheine moiety from coenzyme A to a Ser of acyl-carrier-protein. This is Holo-[acyl-carrier-protein] synthase from Cupriavidus necator (strain ATCC 17699 / DSM 428 / KCTC 22496 / NCIMB 10442 / H16 / Stanier 337) (Ralstonia eutropha).